Reading from the N-terminus, the 380-residue chain is Cytochrome b (380 aa).

The next 4 membrane-spanning stretches (helical) occupy residues 34 to 54 (FGSLLGICLMTQILTGLLLAM), 78 to 99 (WLIRNLHANGASFFFICIYLHI), 114 to 134 (WNTGVILLLTLMATAFVGYVL), and 179 to 199 (FFALHFLLPFMIAGLTLVHLT). Positions 84 and 98 each coordinate heme b. His-183 and His-197 together coordinate heme b. An a ubiquinone-binding site is contributed by His-202. 4 helical membrane passes run 227-247 (LKDILGFTLMFLLLTTLALFS), 289-309 (LGGVLALAASVLILFLAPFLH), 321-341 (LSQLLFWVLVANLFILTWVGS), and 348-368 (FIIIGQLASFTYFTILLILFP).

This sequence belongs to the cytochrome b family. The cytochrome bc1 complex contains 11 subunits: 3 respiratory subunits (MT-CYB, CYC1 and UQCRFS1), 2 core proteins (UQCRC1 and UQCRC2) and 6 low-molecular weight proteins (UQCRH/QCR6, UQCRB/QCR7, UQCRQ/QCR8, UQCR10/QCR9, UQCR11/QCR10 and a cleavage product of UQCRFS1). This cytochrome bc1 complex then forms a dimer. Requires heme b as cofactor.

The protein resides in the mitochondrion inner membrane. Its function is as follows. Component of the ubiquinol-cytochrome c reductase complex (complex III or cytochrome b-c1 complex) that is part of the mitochondrial respiratory chain. The b-c1 complex mediates electron transfer from ubiquinol to cytochrome c. Contributes to the generation of a proton gradient across the mitochondrial membrane that is then used for ATP synthesis. In Procellaria westlandica (Westland petrel), this protein is Cytochrome b (MT-CYB).